Here is a 246-residue protein sequence, read N- to C-terminus: ATP synthase subunit a, chloroplastic (246 aa).

Transmembrane regions (helical) follow at residues 33-53 (VHGQVLLVSWFVLAVIIGFGL), 99-119 (TIFLFVFVSNWSGALVPWALI), 133-153 (INTTVALALLTSIAYFYAGIN), 201-221 (GVLVALVPLVIPIPLMLLGLF), and 222-242 (TSAIQALVFSTLAGAYIGESL).

The protein belongs to the ATPase A chain family. In terms of assembly, F-type ATPases have 2 components, CF(1) - the catalytic core - and CF(0) - the membrane proton channel. CF(1) has five subunits: alpha(3), beta(3), gamma(1), delta(1), epsilon(1). CF(0) has four main subunits: a, b, b' and c.

The protein resides in the plastid. It is found in the chloroplast thylakoid membrane. In terms of biological role, key component of the proton channel; it plays a direct role in the translocation of protons across the membrane. This is ATP synthase subunit a, chloroplastic from Oltmannsiellopsis viridis (Marine flagellate).